The following is a 206-amino-acid chain: ATP phosphoribosyltransferase (206 aa).

This sequence belongs to the ATP phosphoribosyltransferase family. Short subfamily. In terms of assembly, heteromultimer composed of HisG and HisZ subunits.

Its subcellular location is the cytoplasm. It catalyses the reaction 1-(5-phospho-beta-D-ribosyl)-ATP + diphosphate = 5-phospho-alpha-D-ribose 1-diphosphate + ATP. It participates in amino-acid biosynthesis; L-histidine biosynthesis; L-histidine from 5-phospho-alpha-D-ribose 1-diphosphate: step 1/9. Functionally, catalyzes the condensation of ATP and 5-phosphoribose 1-diphosphate to form N'-(5'-phosphoribosyl)-ATP (PR-ATP). Has a crucial role in the pathway because the rate of histidine biosynthesis seems to be controlled primarily by regulation of HisG enzymatic activity. The sequence is that of ATP phosphoribosyltransferase from Sulfurovum sp. (strain NBC37-1).